Reading from the N-terminus, the 238-residue chain is D-aminoacyl-tRNA deacylase (238 aa).

Belongs to the DtdA deacylase family. As to quaternary structure, monomer. Zn(2+) is required as a cofactor.

The catalysed reaction is a D-aminoacyl-tRNA + H2O = a tRNA + a D-alpha-amino acid + H(+). It carries out the reaction glycyl-tRNA(Ala) + H2O = tRNA(Ala) + glycine + H(+). The enzyme catalyses D-tyrosyl-tRNA(Tyr) + H2O = D-tyrosine + tRNA(Tyr). D-aminoacyl-tRNA deacylase with broad substrate specificity. By recycling D-aminoacyl-tRNA to D-amino acids and free tRNA molecules, this enzyme counteracts the toxicity associated with the formation of D-aminoacyl-tRNA entities in vivo. Catalyzes the hydrolysis of D-tyrosyl-tRNA(Tyr). This chain is D-aminoacyl-tRNA deacylase, found in Saccharolobus solfataricus (strain ATCC 35092 / DSM 1617 / JCM 11322 / P2) (Sulfolobus solfataricus).